The following is a 965-amino-acid chain: MDALRPGSPYQPIIEELRNYPQKRFYNVSKLGGTKYDVLPYSIRVLFESSIRNCDGFLVKETDAMNILDWKTKQNDVEVPFCPARVVLQDFTGIPAMVDFAAMREAVRNAGGDPVKVNPACPTDLTVDHSLQIDFSKCAIQNAPNPGGGEAQKPTAKLSPLKGQPRKLPCRGQSSCKGPCSAGELSRASGQFSAQIENTPILCPFHLQPVPEPETVLKNQEMEFGRNRERLQFFKWSSKVFKNTSIIPPETGMAHQVNLEYLSRVVFDVEDFLYPDSVVGTDSHTTMVNGLGILGWGVGGIETEAVMLGMPVTLTLPEVVGCELTGTASPLATSIDIVLGITKHLRQAEVAGKFVEFFGSGVSQLSVADRTTIANMCPEYGAILSFFPVDNVTLKHLRHTGFDEAKLEVMEAYLKAVKLFRNGESSSREPEYSQVVQISLSSIIPHVSGPKRSQDRVAVNNMKSDFQTCLNEKAGVKGFQIAAEKQNDVVPVQYEGNQYELSHGCVVIAAVISCTNNCNPSVMLAAGLLAKKAVEAGLEVKPYIRTSLSPGSGMVTHYLSSSGVLPYLSKLGFEVVGYGCSTCVGNTAPLPEAIRNAIKQGDIIACGVLSGTKNFEGRLCDCVRANYLASPPLVVAYAIAGTVRIDFETEPLGTGFNGRSIYLRDIWPTRKELHTVEEECVISSMFKELKEKMEKGNKRWNSLEAPESPLFPWDLKSTYIRCPSFFDKLAKEPVSLQPIENAHVLLYLGDSVTTDHISPAGSIARSSAAAKYLTNKGLTPREFNSYGARRGNDAVMTRGTFANIKLLNKFIGKPAPKTIHFPSGQTLDVFEAAELYQKEGIPVIILAGKKYGLGSSRDWAAKGPFLLGVKAVLAESYEKVHKSQLIGIGIAPLQFLPGENPNTLGLTGREQFSILFPPELSPKMTLDIKTSTGKVFSVFALFENDVEITLYKNGGSLNFVARRFL.

Positions 142 to 170 (NAPNPGGGEAQKPTAKLSPLKGQPRKLPC) are disordered. Residues Cys514, Cys580, and Cys583 each contribute to the [4Fe-4S] cluster site.

It belongs to the aconitase/IPM isomerase family. It depends on [4Fe-4S] cluster as a cofactor. In terms of processing, ubiquitinated and degraded by the proteasome in presence of high level of iron and oxygen.

Its subcellular location is the cytoplasm. RNA-binding protein that binds to iron-responsive elements (IRES), which are stem-loop structures found in the 5'-UTR of ferritin, and delta aminolevulinic acid synthase mRNAs, and in the 3'-UTR of transferrin receptor mRNA. Binding to the IRE element in ferritin results in the repression of its mRNA translation. Binding of the protein to the transferrin receptor mRNA inhibits the degradation of this otherwise rapidly degraded mRNA. This Gallus gallus (Chicken) protein is Iron-responsive element-binding protein 2 (IREB2).